Here is a 124-residue protein sequence, read N- to C-terminus: MLLPRRGLRTLPSLCLYILVLVWVVACEPEGTPTPLPAPEESRWSLVPSSVKELVGPLLTRTRERWQWFWGPGALQGFVQTYYDDHLRDLGPRAQAWLTSSRDRLLNTAQGLCPRLLCGDKDQD.

Residues 1 to 27 (MLLPRRGLRTLPSLCLYILVLVWVVAC) form the signal peptide.

Belongs to the apolipoprotein C4 family. In terms of processing, glycosylated; contains sialic acid. Present in up to five sialylated isoforms. In terms of tissue distribution, blood plasma, associated primarily with VLDL and HDL. Expressed mainly in the liver.

Its subcellular location is the secreted. Functionally, may participate in lipoprotein metabolism. This chain is Apolipoprotein C-IV (APOC4), found in Oryctolagus cuniculus (Rabbit).